Consider the following 160-residue polypeptide: Cytochrome b6-f complex subunit 4 (160 aa).

A run of 3 helical transmembrane segments spans residues 36–56 (LLYIFPVVILGTIACNVGLAV), 95–115 (LLGVLLMVSVPAGLLTVPFLE), and 131–151 (TVFLIGTAAALWLGIGATLPI).

Belongs to the cytochrome b family. PetD subfamily. In terms of assembly, the 4 large subunits of the cytochrome b6-f complex are cytochrome b6, subunit IV (17 kDa polypeptide, petD), cytochrome f and the Rieske protein, while the 4 small subunits are petG, petL, petM and petN. The complex functions as a dimer.

It is found in the plastid. The protein resides in the chloroplast thylakoid membrane. Functionally, component of the cytochrome b6-f complex, which mediates electron transfer between photosystem II (PSII) and photosystem I (PSI), cyclic electron flow around PSI, and state transitions. The polypeptide is Cytochrome b6-f complex subunit 4 (Arabidopsis thaliana (Mouse-ear cress)).